A 768-amino-acid polypeptide reads, in one-letter code: 5-methyltetrahydropteroyltriglutamate--homocysteine methyltransferase (768 aa).

5-methyltetrahydropteroyltri-L-glutamate contacts are provided by residues 17-20 (RELK) and Lys117. Residues 442-444 (IGS) and Glu495 each bind L-homocysteine. L-methionine is bound by residues 442–444 (IGS) and Glu495. Residues 526 to 527 (RC) and Trp572 each bind 5-methyltetrahydropteroyltri-L-glutamate. Position 610 (Asp610) interacts with L-homocysteine. Position 610 (Asp610) interacts with L-methionine. Glu616 contributes to the 5-methyltetrahydropteroyltri-L-glutamate binding site. 3 residues coordinate Zn(2+): His653, Cys655, and Glu677. His706 serves as the catalytic Proton donor. Zn(2+) is bound at residue Cys738.

Belongs to the vitamin-B12 independent methionine synthase family. Zn(2+) serves as cofactor.

It carries out the reaction 5-methyltetrahydropteroyltri-L-glutamate + L-homocysteine = tetrahydropteroyltri-L-glutamate + L-methionine. It functions in the pathway amino-acid biosynthesis; L-methionine biosynthesis via de novo pathway; L-methionine from L-homocysteine (MetE route): step 1/1. Functionally, catalyzes the transfer of a methyl group from 5-methyltetrahydrofolate to homocysteine resulting in methionine formation. The polypeptide is 5-methyltetrahydropteroyltriglutamate--homocysteine methyltransferase (Bifidobacterium adolescentis (strain ATCC 15703 / DSM 20083 / NCTC 11814 / E194a)).